The primary structure comprises 245 residues: 6-carboxyhexanoate--CoA ligase (245 aa).

The protein belongs to the BioW family. As to quaternary structure, homodimer. Mg(2+) serves as cofactor.

It carries out the reaction heptanedioate + ATP + CoA = 6-carboxyhexanoyl-CoA + AMP + diphosphate. The protein operates within metabolic intermediate metabolism; pimeloyl-CoA biosynthesis; pimeloyl-CoA from pimelate: step 1/1. Its function is as follows. Catalyzes the transformation of pimelate into pimeloyl-CoA with concomitant hydrolysis of ATP to AMP. In Methanococcus vannielii (strain ATCC 35089 / DSM 1224 / JCM 13029 / OCM 148 / SB), this protein is 6-carboxyhexanoate--CoA ligase.